A 470-amino-acid polypeptide reads, in one-letter code: Neuraminidase (470 aa).

Over 1–14 the chain is Intravirion; the sequence is MNPNQKIITIGSAS. Residues 11–32 are involved in apical transport and lipid raft association; it reads GSASLGILILNVILHVVSIIVT. The helical transmembrane segment at 15-35 threads the bilayer; that stretch reads LGILILNVILHVVSIIVTVLV. The hypervariable stalk region stretch occupies residues 32–86; it reads TVLVLNNNGTGLNCNGTIIREYNETVRVERVIQWYNTNTIEYIERPSNEYYMNNT. Topologically, residues 36–470 are virion surface; that stretch reads LNNNGTGLNC…AILPFDIDKM (435 aa). N-linked (GlcNAc...) asparagine; by host glycosylation is found at asparagine 39, asparagine 46, asparagine 54, and asparagine 84. The segment at 89–470 is head of neuraminidase; that stretch reads LCEAQGFAPF…AILPFDIDKM (382 aa). Intrachain disulfides connect cysteine 90–cysteine 417, cysteine 122–cysteine 127, cysteine 182–cysteine 229, cysteine 231–cysteine 236, cysteine 277–cysteine 290, cysteine 279–cysteine 288, cysteine 316–cysteine 335, and cysteine 421–cysteine 446. A substrate-binding site is contributed by arginine 116. Asparagine 144 carries N-linked (GlcNAc...) asparagine; by host glycosylation. Catalysis depends on aspartate 149, which acts as the Proton donor/acceptor. Arginine 150 contributes to the substrate binding site. Residue 275-276 coordinates substrate; it reads EE. Arginine 291 is a substrate binding site. Residue aspartate 292 coordinates Ca(2+). Asparagine 293 is a glycosylation site (N-linked (GlcNAc...) asparagine; by host). Glycine 296 and aspartate 322 together coordinate Ca(2+). Arginine 368 is a substrate binding site. N-linked (GlcNAc...) asparagine; by host glycosylation occurs at asparagine 398. Tyrosine 402 functions as the Nucleophile in the catalytic mechanism.

This sequence belongs to the glycosyl hydrolase 34 family. In terms of assembly, homotetramer. Requires Ca(2+) as cofactor. N-glycosylated.

Its subcellular location is the virion membrane. The protein resides in the host apical cell membrane. It carries out the reaction Hydrolysis of alpha-(2-&gt;3)-, alpha-(2-&gt;6)-, alpha-(2-&gt;8)- glycosidic linkages of terminal sialic acid residues in oligosaccharides, glycoproteins, glycolipids, colominic acid and synthetic substrates.. Its activity is regulated as follows. Inhibited by the neuraminidase inhibitors zanamivir (Relenza) and oseltamivir (Tamiflu). These drugs interfere with the release of progeny virus from infected cells and are effective against all influenza strains. Resistance to neuraminidase inhibitors is quite rare. In terms of biological role, catalyzes the removal of terminal sialic acid residues from viral and cellular glycoconjugates. Cleaves off the terminal sialic acids on the glycosylated HA during virus budding to facilitate virus release. Additionally helps virus spread through the circulation by further removing sialic acids from the cell surface. These cleavages prevent self-aggregation and ensure the efficient spread of the progeny virus from cell to cell. Otherwise, infection would be limited to one round of replication. Described as a receptor-destroying enzyme because it cleaves a terminal sialic acid from the cellular receptors. May facilitate viral invasion of the upper airways by cleaving the sialic acid moieties on the mucin of the airway epithelial cells. Likely to plays a role in the budding process through its association with lipid rafts during intracellular transport. May additionally display a raft-association independent effect on budding. Plays a role in the determination of host range restriction on replication and virulence. Sialidase activity in late endosome/lysosome traffic seems to enhance virus replication. This chain is Neuraminidase, found in Influenza A virus (strain A/Equine/Santiago/1/1985 H3N8).